A 718-amino-acid polypeptide reads, in one-letter code: Protein spire homolog 2 (718 aa).

2 disordered regions span residues 1–22 (MARA…ARPE) and 143–166 (DSSC…EGGP). A compositionally biased stretch (low complexity) spans 10-21 (AAPERAGGAARP). A KIND domain is found at 26–207 (LSLEEVLKVY…RALFVETLEL (182 aa)). WH2 domains lie at 251–265 (QLMR…LKKV), 281–299 (PFEM…LRKV), and 345–362 (LHEK…LRPV). Phosphoserine is present on Ser-374. Positions 397 to 434 (TDTGSGSQRPRPRVLLKAPTLAEMEEMNTSEEEESPCG) are disordered. The segment covering 419–432 (EMEEMNTSEEEESP) has biased composition (acidic residues). A phosphoserine mark is found at Ser-443, Ser-445, and Ser-479. The disordered stretch occupies residues 456–518 (MASGLQSAAQ…SSLSSVDGPE (63 aa)). The span at 496–513 (SGQSQPLPSSALPSSLSS) shows a compositional bias: low complexity. Residues 538–558 (LALTVEEVVDVRRVLVKAEME) are spir-box.

The protein belongs to the spire family. Detected in oocytes.

It is found in the cytoplasm. The protein localises to the cytoskeleton. Its subcellular location is the cytosol. The protein resides in the cell membrane. It localises to the cytoplasmic vesicle membrane. Its function is as follows. Acts as an actin nucleation factor, remains associated with the slow-growing pointed end of the new filament. Involved in intracellular vesicle transport along actin fibers, providing a novel link between actin cytoskeleton dynamics and intracellular transport. Required for asymmetric spindle positioning and asymmetric cell division during oocyte meiosis. Required for normal formation of the cleavage furrow and for polar body extrusion during female germ cell meiosis. Also acts in the nucleus: together with SPIRE1 and SPIRE2, promotes assembly of nuclear actin filaments in response to DNA damage in order to facilitate movement of chromatin and repair factors after DNA damage. This chain is Protein spire homolog 2 (Spire2), found in Mus musculus (Mouse).